A 154-amino-acid chain; its full sequence is 3-hydroxyacyl-[acyl-carrier-protein] dehydratase FabZ (154 aa).

His-57 is an active-site residue.

The protein belongs to the thioester dehydratase family. FabZ subfamily.

The protein localises to the cytoplasm. The catalysed reaction is a (3R)-hydroxyacyl-[ACP] = a (2E)-enoyl-[ACP] + H2O. Functionally, involved in unsaturated fatty acids biosynthesis. Catalyzes the dehydration of short chain beta-hydroxyacyl-ACPs and long chain saturated and unsaturated beta-hydroxyacyl-ACPs. This Sinorhizobium fredii (strain NBRC 101917 / NGR234) protein is 3-hydroxyacyl-[acyl-carrier-protein] dehydratase FabZ.